The sequence spans 385 residues: MALPHDSNETSYLLPPNNEDWDRQAIPDFVYGQKDLMAEGIQWPRNAPGVLEALPQSPFDAALCSAWKQRVELGLFRYRLRELQTQILPGVVGFVAQLNVERGVQRRRPQTIKSVRQAFDPEQFNFNKIQPGEVLYRLHREPDLPGTLLQEDILVVINVSPLEWGHVLLVPEPARGLPQRLLPGALRAGIEAVLLSLHPGFRVGFNSLGGLASVNHLHLHGYYLAHRLPVEQAPSEPLDPGGHLHLLQGLPAPGFLFYTRGPGLDLESLICRVCRATDYLTDHEIAHNLFVTRGAPPGKTSPSSALTGVRVILWARKSCFGIKDGEAFNVALCELAGHLPVKTSQDFSSLTEAAAVALIQDCRLPPSQAEEVQAALVALMSQKEQ.

Catalysis depends on His-218, which acts as the Tele-GMP-histidine intermediate.

Belongs to the GDPGP1 family.

It is found in the cytoplasm. The catalysed reaction is GDP-alpha-D-glucose + phosphate = alpha-D-glucose 1-phosphate + GDP + H(+). In terms of biological role, specific and highly efficient GDP-D-glucose phosphorylase regulating the levels of GDP-D-glucose in cells. This Macaca fascicularis (Crab-eating macaque) protein is GDP-D-glucose phosphorylase 1 (GDPGP1).